A 175-amino-acid polypeptide reads, in one-letter code: Alkyl hydroperoxide reductase AhpD (175 aa).

Residue Cys130 is the Proton donor of the active site. The cysteines at positions 130 and 133 are disulfide-linked. The Cysteine sulfenic acid (-SOH) intermediate role is filled by Cys133.

The protein belongs to the AhpD family. In terms of assembly, homotrimer.

It carries out the reaction N(6)-[(R)-dihydrolipoyl]-L-lysyl-[lipoyl-carrier protein] + a hydroperoxide = N(6)-[(R)-lipoyl]-L-lysyl-[lipoyl-carrier protein] + an alcohol + H2O. In terms of biological role, antioxidant protein with alkyl hydroperoxidase activity. Required for the reduction of the AhpC active site cysteine residues and for the regeneration of the AhpC enzyme activity. This chain is Alkyl hydroperoxide reductase AhpD, found in Mycobacteroides abscessus (strain ATCC 19977 / DSM 44196 / CCUG 20993 / CIP 104536 / JCM 13569 / NCTC 13031 / TMC 1543 / L948) (Mycobacterium abscessus).